Consider the following 262-residue polypeptide: Acyl-[acyl-carrier-protein]--UDP-N-acetylglucosamine O-acyltransferase (262 aa).

It belongs to the transferase hexapeptide repeat family. LpxA subfamily. Homotrimer.

It localises to the cytoplasm. The enzyme catalyses a (3R)-hydroxyacyl-[ACP] + UDP-N-acetyl-alpha-D-glucosamine = a UDP-3-O-[(3R)-3-hydroxyacyl]-N-acetyl-alpha-D-glucosamine + holo-[ACP]. The protein operates within glycolipid biosynthesis; lipid IV(A) biosynthesis; lipid IV(A) from (3R)-3-hydroxytetradecanoyl-[acyl-carrier-protein] and UDP-N-acetyl-alpha-D-glucosamine: step 1/6. Functionally, involved in the biosynthesis of lipid A, a phosphorylated glycolipid that anchors the lipopolysaccharide to the outer membrane of the cell. The polypeptide is Acyl-[acyl-carrier-protein]--UDP-N-acetylglucosamine O-acyltransferase (Vibrio vulnificus (strain CMCP6)).